The sequence spans 792 residues: DNA ligase (792 aa).

NAD(+)-binding positions include 42-46, 91-92, and Glu-124; these read DAEYD and SL. The active-site N6-AMP-lysine intermediate is Lys-126. Residues Arg-147, Glu-189, Lys-306, and Lys-330 each contribute to the NAD(+) site. Zn(2+)-binding residues include Cys-424, Cys-426, Cys-448, and Cys-454. A BRCT domain is found at 714-792; it reads KTDTAVAGKT…EDEWLAMVGG (79 aa).

The protein belongs to the NAD-dependent DNA ligase family. LigA subfamily. It depends on Mg(2+) as a cofactor. Mn(2+) serves as cofactor.

The catalysed reaction is NAD(+) + (deoxyribonucleotide)n-3'-hydroxyl + 5'-phospho-(deoxyribonucleotide)m = (deoxyribonucleotide)n+m + AMP + beta-nicotinamide D-nucleotide.. Functionally, DNA ligase that catalyzes the formation of phosphodiester linkages between 5'-phosphoryl and 3'-hydroxyl groups in double-stranded DNA using NAD as a coenzyme and as the energy source for the reaction. It is essential for DNA replication and repair of damaged DNA. The protein is DNA ligase of Caulobacter sp. (strain K31).